The chain runs to 218 residues: Protein N-lysine methyltransferase METTL21A (218 aa).

S-adenosyl-L-methionine contacts are provided by residues Trp47, 73–75 (GAG), Asp94, Trp125, and Ala143.

It belongs to the methyltransferase superfamily. METTL21 family.

The protein resides in the cytoplasm. It carries out the reaction L-lysyl-[protein] + 3 S-adenosyl-L-methionine = N(6),N(6),N(6)-trimethyl-L-lysyl-[protein] + 3 S-adenosyl-L-homocysteine + 3 H(+). Its function is as follows. Protein-lysine methyltransferase that selectively trimethylates residues in heat shock protein 70 (HSP70) family members. The chain is Protein N-lysine methyltransferase METTL21A (mettl21a) from Danio rerio (Zebrafish).